The chain runs to 319 residues: Lipoyl synthase (319 aa).

Residues Met-1–Pro-32 are disordered. The segment covering Arg-16–Pro-32 has biased composition (basic and acidic residues). [4Fe-4S] cluster-binding residues include Cys-61, Cys-66, Cys-72, Cys-87, Cys-91, Cys-94, and Ser-300. In terms of domain architecture, Radical SAM core spans Trp-73–Leu-289.

Belongs to the radical SAM superfamily. Lipoyl synthase family. It depends on [4Fe-4S] cluster as a cofactor.

Its subcellular location is the cytoplasm. It carries out the reaction [[Fe-S] cluster scaffold protein carrying a second [4Fe-4S](2+) cluster] + N(6)-octanoyl-L-lysyl-[protein] + 2 oxidized [2Fe-2S]-[ferredoxin] + 2 S-adenosyl-L-methionine + 4 H(+) = [[Fe-S] cluster scaffold protein] + N(6)-[(R)-dihydrolipoyl]-L-lysyl-[protein] + 4 Fe(3+) + 2 hydrogen sulfide + 2 5'-deoxyadenosine + 2 L-methionine + 2 reduced [2Fe-2S]-[ferredoxin]. It participates in protein modification; protein lipoylation via endogenous pathway; protein N(6)-(lipoyl)lysine from octanoyl-[acyl-carrier-protein]: step 2/2. Functionally, catalyzes the radical-mediated insertion of two sulfur atoms into the C-6 and C-8 positions of the octanoyl moiety bound to the lipoyl domains of lipoate-dependent enzymes, thereby converting the octanoylated domains into lipoylated derivatives. The chain is Lipoyl synthase from Rhodopseudomonas palustris (strain BisB5).